Reading from the N-terminus, the 355-residue chain is UDP-N-acetylglucosamine--N-acetylmuramyl-(pentapeptide) pyrophosphoryl-undecaprenol N-acetylglucosamine transferase (355 aa).

Residues 14–16 (TGG), Asn126, Arg162, Ser190, Ile243, 262–267 (ALTVSE), and Gln287 contribute to the UDP-N-acetyl-alpha-D-glucosamine site.

It belongs to the glycosyltransferase 28 family. MurG subfamily.

It is found in the cell inner membrane. It catalyses the reaction di-trans,octa-cis-undecaprenyl diphospho-N-acetyl-alpha-D-muramoyl-L-alanyl-D-glutamyl-meso-2,6-diaminopimeloyl-D-alanyl-D-alanine + UDP-N-acetyl-alpha-D-glucosamine = di-trans,octa-cis-undecaprenyl diphospho-[N-acetyl-alpha-D-glucosaminyl-(1-&gt;4)]-N-acetyl-alpha-D-muramoyl-L-alanyl-D-glutamyl-meso-2,6-diaminopimeloyl-D-alanyl-D-alanine + UDP + H(+). It functions in the pathway cell wall biogenesis; peptidoglycan biosynthesis. Its function is as follows. Cell wall formation. Catalyzes the transfer of a GlcNAc subunit on undecaprenyl-pyrophosphoryl-MurNAc-pentapeptide (lipid intermediate I) to form undecaprenyl-pyrophosphoryl-MurNAc-(pentapeptide)GlcNAc (lipid intermediate II). The chain is UDP-N-acetylglucosamine--N-acetylmuramyl-(pentapeptide) pyrophosphoryl-undecaprenol N-acetylglucosamine transferase from Vibrio vulnificus (strain CMCP6).